Consider the following 254-residue polypeptide: Sulfoacetaldehyde reductase (254 aa).

Position 8 to 32 (8 to 32) interacts with NADP(+); sequence FITGATSGFGEAAAQVFADAGWSLV. Ser141 contacts substrate. Tyr154 (proton acceptor) is an active-site residue.

Belongs to the short-chain dehydrogenases/reductases (SDR) family. As to quaternary structure, homodimer and heterotetramer.

It carries out the reaction 2-hydroxyethane-1-sulfonate + NADP(+) = sulfoacetaldehyde + NADPH + H(+). The protein operates within organosulfur degradation. Functionally, catalyzes the formation of isethionate from 2-sulfoacetaldehyde in the deaminative pathway of taurine. The enzyme is specific for NADPH; NADH is not a substrate. This is Sulfoacetaldehyde reductase (isfD) from Klebsiella oxytoca.